Consider the following 184-residue polypeptide: Photosystem I assembly protein Ycf4 (184 aa).

The next 2 helical transmembrane spans lie at 19 to 39 and 57 to 77; these read ISNF…LLVG and IIFF…LFIS.

This sequence belongs to the Ycf4 family.

The protein resides in the plastid. Its subcellular location is the chloroplast thylakoid membrane. Its function is as follows. Seems to be required for the assembly of the photosystem I complex. The sequence is that of Photosystem I assembly protein Ycf4 from Nicotiana sylvestris (Wood tobacco).